The primary structure comprises 176 residues: Sigma intracellular receptor 2 (176 aa).

Residues 1-9 (MGTLGARRG) lie on the Cytoplasmic side of the membrane. Residues 10–30 (LEWFLGFYFLSHIPITLLMDL) form a helical membrane-spanning segment. One can recognise an EXPERA domain in the interval 10–158 (LEWFLGFYFL…PYFLIPLILL (149 aa)). Topologically, residues 31-68 (QGVLPRDLYPVELRNLQQWYIEEFKDPLLQTPPAWFKS) are lumenal. A helical transmembrane segment spans residues 69–89 (FLFCELVFQLPFFPIAAYAFF). Residues valine 75 and glutamine 77 each coordinate cholesterol. Topologically, residues 90-99 (KGGCKWIRTP) are cytoplasmic. The chain crosses the membrane as a helical span at residues 100 to 120 (AIIYSVHTMTTLIPILSTLLL). The Lumenal portion of the chain corresponds to 121–141 (DDFSKASHFRGQGPKTFQERL). Residues 142 to 162 (FLISVYIPYFLIPLILLLFMV) traverse the membrane as a helical segment. At 163-176 (RNPYYKSEEKRKKK) the chain is on the cytoplasmic side. Residues 172–176 (KRKKK) carry the ER retention motif motif.

Belongs to the TMEM97/sigma-2 receptor family. Homodimer. Interacts with NPC1; the interaction impairs NPC1-mediated cholesterol transport. Interacts with PGRMC1 and LDLR; the interaction increases LDL internalization. Interacts with histatin 1/HTN1; the interaction induces HTN1-stimulating wound healing. Interacts with TSPO.

It localises to the rough endoplasmic reticulum membrane. It is found in the nucleus membrane. Its function is as follows. Sigma-2 receptor which contributes to ameliorate dysfunctional cellular processes and slow degenerative progression by regulating cell functions including cholesterol biosynthesis/trafficking, membrane trafficking, autophagy, lipid membrane-bound protein trafficking, and receptor stabilization at the cell surface. Forms a ternary complex with PGRMC1 receptor and low density lipoprotein receptor/LDLR at the plasma membrane, which increases LDLR-mediated LDL cholesterol internalization. Decreases lysosomal sterol transporter NPC1 availability to the cell, probably through NPC1-binding, hence controlling lipid transport, including cholesterol and LBPA, outside of late endosome/lysosome. Binds regio- and stereoselective ligand 20(S)-hydroxycholesterol (20(S)-OHC) which enhances TMEM97-NPC1 interaction and decreases TMEM97-PGRMC1 and TMEM97-TSPO interactions, thereby linking OHC binding to cholesterol homeostasis. Also able to bind cholesterol. Binds histatin 1 (Hst 1)/HN1 salivary peptide at the ER membrane, which is critical for increasing mitochondria-ER contacts and stimulating Hst1 wound healing properties. May alter the activity of some cytochrome P450 proteins. Although shows homologies with sterol isomerases (EXPERA domain), not able to catalyze sterol isomerization. However, may act as sensors of these molecules. Acts as a quality control factor in the ER, promoting the proteolytic degradation of nonproductive and extramitochondrial precursor proteins in the ER membrane thus removing them from the ER surface. The protein is Sigma intracellular receptor 2 (TMEM97) of Bos taurus (Bovine).